A 564-amino-acid polypeptide reads, in one-letter code: Dihydroxy-acid dehydratase (564 aa).

Cysteine 55 contacts [2Fe-2S] cluster. Aspartate 87 provides a ligand contact to Mg(2+). Cysteine 128 is a [2Fe-2S] cluster binding site. Mg(2+)-binding residues include aspartate 129 and lysine 130. Lysine 130 carries the N6-carboxylysine modification. Cysteine 200 contributes to the [2Fe-2S] cluster binding site. A Mg(2+)-binding site is contributed by glutamate 452. Residue serine 478 is the Proton acceptor of the active site.

It belongs to the IlvD/Edd family. In terms of assembly, homodimer. The cofactor is [2Fe-2S] cluster. It depends on Mg(2+) as a cofactor.

The enzyme catalyses (2R)-2,3-dihydroxy-3-methylbutanoate = 3-methyl-2-oxobutanoate + H2O. It carries out the reaction (2R,3R)-2,3-dihydroxy-3-methylpentanoate = (S)-3-methyl-2-oxopentanoate + H2O. Its pathway is amino-acid biosynthesis; L-isoleucine biosynthesis; L-isoleucine from 2-oxobutanoate: step 3/4. It functions in the pathway amino-acid biosynthesis; L-valine biosynthesis; L-valine from pyruvate: step 3/4. Its function is as follows. Functions in the biosynthesis of branched-chain amino acids. Catalyzes the dehydration of (2R,3R)-2,3-dihydroxy-3-methylpentanoate (2,3-dihydroxy-3-methylvalerate) into 2-oxo-3-methylpentanoate (2-oxo-3-methylvalerate) and of (2R)-2,3-dihydroxy-3-methylbutanoate (2,3-dihydroxyisovalerate) into 2-oxo-3-methylbutanoate (2-oxoisovalerate), the penultimate precursor to L-isoleucine and L-valine, respectively. In Polaromonas sp. (strain JS666 / ATCC BAA-500), this protein is Dihydroxy-acid dehydratase.